The chain runs to 491 residues: CTD small phosphatase-like protein 1 (491 aa).

Disordered regions lie at residues 1 to 53 (MTYA…SLDY), 140 to 198 (KLTK…TARR), 221 to 249 (KIQSSQRTNSTNNNHQNGRPSTPTNTGPP), and 261 to 282 (TVTGLPTTGQACQQNGSGDGVT). The segment covering 17-26 (VPPPRTPVGP) has biased composition (pro residues). Residues 37–49 (SASQPLQPKNGAN) are compositionally biased toward polar residues. Over residues 141-156 (LTKDEKNGGKMNRDGG) the composition is skewed to basic and acidic residues. Residues 176-187 (ASTPLNSFSANA) show a composition bias toward polar residues. The segment covering 223–237 (QSSQRTNSTNNNHQN) has biased composition (low complexity). 2 stretches are compositionally biased toward polar residues: residues 238 to 249 (GRPSTPTNTGPP) and 264 to 276 (GLPTTGQACQQNG). In terms of domain architecture, FCP1 homology spans 307–465 (QDSNKKCLVI…LDILPSLEHL (159 aa)). D317 functions as the 4-aspartylphosphate intermediate in the catalytic mechanism. D317, D319, and N428 together coordinate Mg(2+). Catalysis depends on D319, which acts as the Proton donor.

May interact (via phosphatase domain) with cpna-1. Isoform a and isoform b may interact with lim-9 (via LIM zinc-binding domain). Isoform a and isoform b may interact (via FCP1 homology domain) with unc-89 (via fibronectin type-III domain 1, Ig-like C2-type domain 48/49 and protein kinase domain 1 or Ig-like C2-type domain 50, fibronectin type-III domain 2 and protein kinase domain 2); the interaction may act as a molecular bridge to bring two unc-89 molecules together or to stabilize a loop between the 2 protein kinase domains. The cofactor is Mg(2+). As to expression, expressed in pharyngeal, vulval and body wall muscles.

It is found in the cytoplasm. The protein resides in the myofibril. It localises to the sarcomere. Its subcellular location is the m line. It carries out the reaction O-phospho-L-seryl-[protein] + H2O = L-seryl-[protein] + phosphate. It catalyses the reaction O-phospho-L-threonyl-[protein] + H2O = L-threonyl-[protein] + phosphate. Its activity is regulated as follows. Inhibited by beryllium trifluoride (BeF(3-)) and tetrafluoroaluminate (AlF(4-)) but not by sodium fluoride (NaF) or sodium orthovanadate (Na3VO4). Phosphatase which may play a role in the egg laying muscles. The chain is CTD small phosphatase-like protein 1 from Caenorhabditis elegans.